The chain runs to 308 residues: D-alanine--D-alanine ligase B (308 aa).

In terms of domain architecture, ATP-grasp spans 102-302 (KKVAAAAGVV…FAELLSWMVE (201 aa)). An ATP-binding site is contributed by 128 to 183 (PMKPPYVVKPVREGSSFGVVIVKEDQPHPPQVIGSADWKYGDEVMVEGYIAGRELT). Mg(2+)-binding residues include aspartate 252, glutamate 269, and asparagine 271.

Belongs to the D-alanine--D-alanine ligase family. Mg(2+) serves as cofactor. The cofactor is Mn(2+).

The protein localises to the cytoplasm. The enzyme catalyses 2 D-alanine + ATP = D-alanyl-D-alanine + ADP + phosphate + H(+). It participates in cell wall biogenesis; peptidoglycan biosynthesis. Its function is as follows. Cell wall formation. In Brucella suis biovar 1 (strain 1330), this protein is D-alanine--D-alanine ligase B.